The primary structure comprises 79 residues: Conotoxin ArMSGL-0124 (79 aa).

A signal peptide spans 1–20 (MSRLGIMVLTLLLLVYMATS). Positions 21–44 (HQDAGEKQATQRDAINFRWKRSLT) are excised as a propeptide. 3 cysteine pairs are disulfide-bonded: Cys52–Cys64, Cys56–Cys73, and Cys63–Cys77. Leu78 carries the leucine amide modification.

The protein belongs to the conotoxin O3 superfamily. Expressed by the venom duct.

The protein localises to the secreted. The sequence is that of Conotoxin ArMSGL-0124 from Conus arenatus (Sand-dusted cone).